The chain runs to 191 residues: Leucyl/phenylalanyl-tRNA--protein transferase (191 aa).

The protein belongs to the L/F-transferase family.

Its subcellular location is the cytoplasm. The catalysed reaction is N-terminal L-lysyl-[protein] + L-leucyl-tRNA(Leu) = N-terminal L-leucyl-L-lysyl-[protein] + tRNA(Leu) + H(+). It carries out the reaction N-terminal L-arginyl-[protein] + L-leucyl-tRNA(Leu) = N-terminal L-leucyl-L-arginyl-[protein] + tRNA(Leu) + H(+). The enzyme catalyses L-phenylalanyl-tRNA(Phe) + an N-terminal L-alpha-aminoacyl-[protein] = an N-terminal L-phenylalanyl-L-alpha-aminoacyl-[protein] + tRNA(Phe). In terms of biological role, functions in the N-end rule pathway of protein degradation where it conjugates Leu, Phe and, less efficiently, Met from aminoacyl-tRNAs to the N-termini of proteins containing an N-terminal arginine or lysine. The protein is Leucyl/phenylalanyl-tRNA--protein transferase of Gloeothece citriformis (strain PCC 7424) (Cyanothece sp. (strain PCC 7424)).